The primary structure comprises 119 residues: Large ribosomal subunit protein uL22 (119 aa).

It belongs to the universal ribosomal protein uL22 family. As to quaternary structure, part of the 50S ribosomal subunit.

This protein binds specifically to 23S rRNA; its binding is stimulated by other ribosomal proteins, e.g. L4, L17, and L20. It is important during the early stages of 50S assembly. It makes multiple contacts with different domains of the 23S rRNA in the assembled 50S subunit and ribosome. Its function is as follows. The globular domain of the protein is located near the polypeptide exit tunnel on the outside of the subunit, while an extended beta-hairpin is found that lines the wall of the exit tunnel in the center of the 70S ribosome. This is Large ribosomal subunit protein uL22 from Pelodictyon phaeoclathratiforme (strain DSM 5477 / BU-1).